Reading from the N-terminus, the 284-residue chain is D-tagatose-1,6-bisphosphate aldolase subunit GatY (284 aa).

The Proton donor role is filled by Asp-82. The Zn(2+) site is built by His-83 and His-180. A dihydroxyacetone phosphate-binding site is contributed by Gly-181. Residue His-208 coordinates Zn(2+). Dihydroxyacetone phosphate-binding positions include 209–211 (GAS) and 230–233 (NVAT).

This sequence belongs to the class II fructose-bisphosphate aldolase family. TagBP aldolase GatY subfamily. Forms a complex with GatZ. Zn(2+) is required as a cofactor.

It carries out the reaction D-tagatofuranose 1,6-bisphosphate = D-glyceraldehyde 3-phosphate + dihydroxyacetone phosphate. It participates in carbohydrate metabolism; D-tagatose 6-phosphate degradation; D-glyceraldehyde 3-phosphate and glycerone phosphate from D-tagatose 6-phosphate: step 2/2. Catalytic subunit of the tagatose-1,6-bisphosphate aldolase GatYZ, which catalyzes the reversible aldol condensation of dihydroxyacetone phosphate (DHAP or glycerone-phosphate) with glyceraldehyde 3-phosphate (G3P) to produce tagatose 1,6-bisphosphate (TBP). Requires GatZ subunit for full activity and stability. Is involved in the catabolism of galactitol. The protein is D-tagatose-1,6-bisphosphate aldolase subunit GatY of Escherichia coli O6:H1 (strain CFT073 / ATCC 700928 / UPEC).